The following is a 758-amino-acid chain: Deoxynucleotidyltransferase terminal-interacting protein 2 (758 aa).

The span at 1-21 shows a compositional bias: polar residues; sequence MVVTRSGLSRTRLQESSQQKR. A disordered region spans residues 1 to 176; that stretch reads MVVTRSGLSR…SQSGTVSDAE (176 aa). Phosphoserine occurs at positions 17, 133, 137, and 140. A compositionally biased stretch (low complexity) spans 128 to 143; it reads DEVVVSEAESHVSGVS. Over residues 155 to 172 the composition is skewed to polar residues; sequence NKANSQRDSSQESQSGTV. Phosphoserine is present on residues serine 173 and serine 183. Lysine 210 is covalently cross-linked (Glycyl lysine isopeptide (Lys-Gly) (interchain with G-Cter in SUMO2)). 4 positions are modified to phosphoserine: serine 229, serine 240, serine 248, and serine 255. Over residues 231–255 the composition is skewed to polar residues; that stretch reads ATQLSARPLSQRNMPNVSDSETYNS. Disordered regions lie at residues 231 to 277, 312 to 353, 377 to 480, and 501 to 552; these read ATQL…HQNL, KVIN…QLSS, DKRG…AEDL, and DKNF…DLLS. Lysine 317 is covalently cross-linked (Glycyl lysine isopeptide (Lys-Gly) (interchain with G-Cter in SUMO2)). Residues 321–353 show a composition bias toward polar residues; the sequence is RSLSEAQDTSLQQSVSQNHSSTPNKKPTFQLSS. Serine 324 and serine 330 each carry phosphoserine. Glycyl lysine isopeptide (Lys-Gly) (interchain with G-Cter in SUMO2) cross-links involve residues lysine 345 and lysine 384. A compositionally biased stretch (basic and acidic residues) spans 377-387; it reads DKRGGSGKKSD. Residues 431 to 440 are compositionally biased toward polar residues; the sequence is LSMTQDTTDS. Over residues 447–456 the composition is skewed to low complexity; it reads SSDESQQSDS. 2 positions are modified to phosphoserine: serine 476 and serine 512. Positions 512–541 form a coiled coil; that stretch reads SEVAIEEEKEEEEKEEENSEEDSSDSDENK. The span at 515–550 shows a compositional bias: acidic residues; that stretch reads AIEEEKEEEEKEEENSEEDSSDSDENKDESSDEEDL. Residues 550 to 607 form a tdBR region; mediates interaction with DNTT region; sequence LLSNTKSKLLKLTSSSIDPGLNIKQLGGLYINFNVDKLQPHKETLTQIKEKKKNELLQ. Glycyl lysine isopeptide (Lys-Gly) (interchain with G-Cter in SUMO2) cross-links involve residues lysine 560, lysine 586, and lysine 608. At threonine 612 the chain carries Phosphothreonine. Residues 621–647 form a disordered region; that stretch reads VPPYSESKHRLQKQRRKERQKTAGNGW. Lysine 628 participates in a covalent cross-link: Glycyl lysine isopeptide (Lys-Gly) (interchain with G-Cter in SUMO2). Over residues 630-639 the composition is skewed to basic residues; it reads RLQKQRRKER. Glycyl lysine isopeptide (Lys-Gly) (interchain with G-Cter in SUMO2) cross-links involve residues lysine 651, lysine 660, lysine 688, and lysine 733.

In terms of assembly, forms a ternary complex with DNTT and core histone; interaction with PCNA releases DNTT and H2A/H2B histones from this ternary complex. Interacts with ESR1, ESR2, PPARG and RXRA. Part of the small subunit (SSU) processome, composed of more than 70 proteins and the RNA chaperone small nucleolar RNA (snoRNA) U3.

Its subcellular location is the nucleus. It is found in the nucleolus. In terms of biological role, regulates the transcriptional activity of DNTT and ESR1. May function as a chromatin remodeling protein. Part of the small subunit (SSU) processome, first precursor of the small eukaryotic ribosomal subunit. During the assembly of the SSU processome in the nucleolus, many ribosome biogenesis factors, an RNA chaperone and ribosomal proteins associate with the nascent pre-rRNA and work in concert to generate RNA folding, modifications, rearrangements and cleavage as well as targeted degradation of pre-ribosomal RNA by the RNA exosome. The polypeptide is Deoxynucleotidyltransferase terminal-interacting protein 2 (Dnttip2) (Mus musculus (Mouse)).